The chain runs to 943 residues: Isoleucine--tRNA ligase (943 aa).

Positions 59-69 (PYANGQIHLGH) match the 'HIGH' region motif. Residue Glu-577 participates in L-isoleucyl-5'-AMP binding. The 'KMSKS' region signature appears at 618–622 (KMSKS). Residue Lys-621 coordinates ATP. Residues Cys-906, Cys-909, Cys-926, and Cys-929 each contribute to the Zn(2+) site.

The protein belongs to the class-I aminoacyl-tRNA synthetase family. IleS type 1 subfamily. Monomer. Zn(2+) is required as a cofactor.

It localises to the cytoplasm. The enzyme catalyses tRNA(Ile) + L-isoleucine + ATP = L-isoleucyl-tRNA(Ile) + AMP + diphosphate. Its function is as follows. Catalyzes the attachment of isoleucine to tRNA(Ile). As IleRS can inadvertently accommodate and process structurally similar amino acids such as valine, to avoid such errors it has two additional distinct tRNA(Ile)-dependent editing activities. One activity is designated as 'pretransfer' editing and involves the hydrolysis of activated Val-AMP. The other activity is designated 'posttransfer' editing and involves deacylation of mischarged Val-tRNA(Ile). In Xanthomonas oryzae pv. oryzae (strain MAFF 311018), this protein is Isoleucine--tRNA ligase.